Here is a 212-residue protein sequence, read N- to C-terminus: Ras-related protein Rab-17 (212 aa).

S29 bears the Phosphoserine mark. 4 residues coordinate GTP: G31, K32, S33, and T50. Positions 33, 50, and 73 each coordinate Mg(2+). The Switch 1 motif lies at 43-54 (DFKSILPTVGCA). The short motif at 75-91 (AGQEKYHSVCHLYFRGA) is the Switch 2 element. G76, N132, K133, D135, and A163 together coordinate GTP. Residues C209 and C210 are each lipidated (S-geranylgeranyl cysteine).

Belongs to the small GTPase superfamily. Rab family. Mg(2+) serves as cofactor. Expressed in melanocytes (at protein level).

It is found in the recycling endosome membrane. It localises to the melanosome. The protein resides in the cell projection. The protein localises to the dendrite. It carries out the reaction GTP + H2O = GDP + phosphate + H(+). With respect to regulation, regulated by guanine nucleotide exchange factors (GEFs) which promote the exchange of bound GDP for free GTP. Regulated by GTPase activating proteins (GAPs) which increase the GTP hydrolysis activity. Inhibited by GDP dissociation inhibitors (GDIs). Functionally, the small GTPases Rab are key regulators of intracellular membrane trafficking, from the formation of transport vesicles to their fusion with membranes. Rabs cycle between an inactive GDP-bound form and an active GTP-bound form that is able to recruit to membranes different set of downstream effectors directly responsible for vesicle formation, movement, tethering and fusion. RAB17 is involved in transcytosis, the directed movement of endocytosed material through the cell and its exocytosis from the plasma membrane at the opposite side. Mainly observed in epithelial cells, transcytosis mediates for instance, the transcellular transport of immunoglobulins from the basolateral surface to the apical surface. Most probably controls membrane trafficking through apical recycling endosomes in a post-endocytic step of transcytosis. Required for melanosome transport and release from melanocytes, it also regulates dendrite and dendritic spine development. May also play a role in cell migration. The chain is Ras-related protein Rab-17 from Homo sapiens (Human).